We begin with the raw amino-acid sequence, 369 residues long: Mitogen-activated protein kinase 11 (369 aa).

Residues 40–326 (VPPLRPIGRG…VDEALCHPYL (287 aa)) form the Protein kinase domain. Residues 46–54 (IGRGASGIV) and Lys-69 contribute to the ATP site. Asp-166 functions as the Proton acceptor in the catalytic mechanism. Thr-198 is modified (phosphothreonine). The short motif at 198-200 (TEY) is the TXY element. At Tyr-200 the chain carries Phosphotyrosine. Thr-203 is subject to Phosphothreonine.

The protein belongs to the protein kinase superfamily. CMGC Ser/Thr protein kinase family. MAP kinase subfamily. As to quaternary structure, interacts with MKK1, MKK2 and MKK6. Post-translationally, dually phosphorylated on Thr-198 and Tyr-200, which activates the enzyme.

It carries out the reaction L-seryl-[protein] + ATP = O-phospho-L-seryl-[protein] + ADP + H(+). The catalysed reaction is L-threonyl-[protein] + ATP = O-phospho-L-threonyl-[protein] + ADP + H(+). Its activity is regulated as follows. Activated by threonine and tyrosine phosphorylation. In Arabidopsis thaliana (Mouse-ear cress), this protein is Mitogen-activated protein kinase 11 (MPK11).